Consider the following 62-residue polypeptide: U10-hottentoxin-Hj2a (62 aa).

The N-terminal stretch at 1-22 (MQKLLIILILFCILKFNVDVEG) is a signal peptide. Intrachain disulfides connect Cys-28–Cys-46, Cys-33–Cys-59, and Cys-37–Cys-61.

The protein belongs to the short scorpion toxin superfamily. Potassium channel inhibitor family. Alpha-KTx 23 subfamily. In terms of tissue distribution, expressed by the venom gland.

It localises to the secreted. Functionally, may block potassium channels. This chain is U10-hottentoxin-Hj2a, found in Hottentotta judaicus (Black scorpion).